The following is a 223-amino-acid chain: Probable transaldolase (223 aa).

Lys86 serves as the catalytic Schiff-base intermediate with substrate.

The protein belongs to the transaldolase family. Type 3B subfamily.

Its subcellular location is the cytoplasm. It carries out the reaction D-sedoheptulose 7-phosphate + D-glyceraldehyde 3-phosphate = D-erythrose 4-phosphate + beta-D-fructose 6-phosphate. Its pathway is carbohydrate degradation; pentose phosphate pathway; D-glyceraldehyde 3-phosphate and beta-D-fructose 6-phosphate from D-ribose 5-phosphate and D-xylulose 5-phosphate (non-oxidative stage): step 2/3. Functionally, transaldolase is important for the balance of metabolites in the pentose-phosphate pathway. This is Probable transaldolase (tal) from Thermoplasma acidophilum (strain ATCC 25905 / DSM 1728 / JCM 9062 / NBRC 15155 / AMRC-C165).